We begin with the raw amino-acid sequence, 127 residues long: uncharacterized protein (127 aa).

The chain crosses the membrane as a helical span at residues 91–113 (IYLIVSIAVSILAIIAFFIFLML).

It is found in the membrane. This is an uncharacterized protein from Bacillus subtilis (strain 168).